A 520-amino-acid polypeptide reads, in one-letter code: Flavin-dependent halogenase radH (520 aa).

FAD is bound by residues glycine 14, alanine 17, and glutamate 47. Chloride contacts are provided by serine 330 and glycine 331.

This sequence belongs to the flavin-dependent halogenase family.

Its pathway is secondary metabolite biosynthesis. Functionally, non-heme halogenase; part of the gene cluster that mediates the biosynthesis of radicicol, a resorcylic acid lactone (RAL) that irreversibly inhibits the HSP90 molecular chaperone, an important target for cancer chemotherapy. The cluster encodes only two apparent post-PKS enzymes, a cytochrome P450 monooxygenase (radP) and a non-heme halogenase (radH) that introduce the epoxide and the chlorine, respectively. If this cluster includes all the genes required for radicicol biosynthesis, the remaining structural features of radicicol are presumably generated by the PKSs rads1 and rads2. The C-2' ketone could arise if the R-PKS rads1 and NR-PKS rads2 each carry out four iterations, in contrast to the five iteration-three iteration split for the hypothemycin PKSs. The origin of the cis 5',6' double bond is not known. The radicicol R-PKS rads1 ER domain may catalyze either double bond isomerization or reduction in the third iteration. The polypeptide is Flavin-dependent halogenase radH (Floropilus chiversii (Chaetomium chiversii)).